The primary structure comprises 2352 residues: Cell wall alpha-1,3-glucan synthase mok12 (2352 aa).

Positions 1786 to 1813 are disordered; sequence SNDFGIREVPLSDANQSSQADSTSIDRY. The span at 1798–1813 shows a compositional bias: polar residues; that stretch reads DANQSSQADSTSIDRY.

Belongs to the glycosyltransferase group 1 family.

The catalysed reaction is [(1-&gt;3)-alpha-D-glucosyl](n) + UDP-alpha-D-glucose = [(1-&gt;3)-alpha-D-glucosyl](n+1) + UDP + H(+). This is Cell wall alpha-1,3-glucan synthase mok12 (mok12) from Schizosaccharomyces pombe (strain 972 / ATCC 24843) (Fission yeast).